The primary structure comprises 62 residues: Conotoxin Sr5.7 (62 aa).

The first 22 residues, 1-22, serve as a signal peptide directing secretion; that stretch reads MRCLPVFVILLLLIASAPSVDA. Positions 23-44 are excised as a propeptide; sequence QLKTKDDVPLASFHDNAKGTQH.

The protein belongs to the conotoxin T superfamily. In terms of processing, contains 2 disulfide bonds that can be either 'C1-C3, C2-C4' or 'C1-C4, C2-C3', since these disulfide connectivities have been observed for conotoxins with cysteine framework V (for examples, see AC P0DQQ7 and AC P81755). In terms of tissue distribution, expressed by the venom duct.

It is found in the secreted. This Conus spurius (Alphabet cone) protein is Conotoxin Sr5.7.